Reading from the N-terminus, the 227-residue chain is LysM and putative peptidoglycan-binding domain-containing protein 1 (227 aa).

Over residues 1-11 (MASPSRQPPPG) the composition is skewed to pro residues. Residues 1 to 22 (MASPSRQPPPGGSGLLQGSRAR) form a disordered region. Ser23 and Ser33 each carry phosphoserine. The region spanning 40–84 (LEHQLEPGDTLAGLALKYGVTMEQIKRANRLYTNDSIFLKKTLYI) is the LysM domain. Residues 97–150 (LDSEEEKDGEEKVHPSNSEVWPHSTERKKQETGAGRANGEVLPTPGQETPTPIH) form a disordered region. Phosphoserine is present on residues Ser99, Ser166, Ser194, and Ser212.

This chain is LysM and putative peptidoglycan-binding domain-containing protein 1 (LYSMD1), found in Homo sapiens (Human).